The chain runs to 66 residues: Clusterin (66 aa).

The protein belongs to the clusterin family. Antiparallel disulfide-linked heterodimer of an alpha chain and a beta chain. Self-associates and forms higher oligomers. Interacts with a broad range of misfolded proteins, including APP, APOC2 and LYZ. Slightly acidic pH promotes interaction with misfolded proteins. Forms high-molecular weight oligomers upon interaction with misfolded proteins. Interacts with APOA1, LRP2, CLUAP1 and PON1. Interacts with the complement membrane attack complex. Interacts (via alpha chain) with XRCC6. Interacts with SYVN1, COMMD1, BTRC, CUL1 and with ubiquitin and SCF (SKP1-CUL1-F-box protein) E3 ubiquitin-protein ligase complexes. Interacts (via alpha chain) with BAX in stressed cells, where BAX undergoes a conformation change leading to association with the mitochondrial membrane. Does not interact with BAX in unstressed cells. Found in a complex with LTF, CLU, EPPIN and SEMG1. Interacts (immaturely glycosylated pre-secreted form) with HSPA5; this interaction promotes CLU stability and facilitates stress-induced CLU retrotranslocation from the secretory pathway to the mitochondria, thereby reducing stress-induced apoptosis by stabilizing mitochondrial membrane integrity. Interacts with BCL2L1; this interaction releases and activates BAX and promotes cell death. Interacts with TGFBR2 and ACVR1. Interacts (secreted form) with STMN3; this interaction may act as an important modulator during neuronal differentiation. Component of a epididymal complex at least composed of soluble form of prion protein PRNP, CLU, BPI, CES5A, MANBA and GLB1. Proteolytically cleaved on its way through the secretory system, probably within the Golgi lumen. Proteolytic cleavage is not necessary for its chaperone activity. All non-secreted forms are not proteolytically cleaved. Chaperone activity of uncleaved forms is dependent on a non-reducing environment. In terms of processing, polyubiquitinated, leading to proteasomal degradation. Under cellular stress, the intracellular level of cleaved form is reduced due to proteasomal degradation. Post-translationally, heavily N-glycosylated. About 30% of the protein mass is comprised of complex N-linked carbohydrate. Endoplasmic reticulum (ER) stress induces changes in glycosylation status and increases level of hypoglycosylated forms. Core carbohydrates are essential for chaperone activity. Non-secreted forms are hypoglycosylated or unglycosylated.

It is found in the secreted. The protein localises to the nucleus. It localises to the cytoplasm. Its subcellular location is the mitochondrion membrane. The protein resides in the cytosol. It is found in the microsome. The protein localises to the endoplasmic reticulum. It localises to the mitochondrion. Its subcellular location is the perinuclear region. The protein resides in the cytoplasmic vesicle. It is found in the secretory vesicle. The protein localises to the chromaffin granule. Functions as extracellular chaperone that prevents aggregation of non native proteins. Prevents stress-induced aggregation of blood plasma proteins. Inhibits formation of amyloid fibrils by APP, APOC2, B2M, CALCA, CSN3, SNCA and aggregation-prone LYZ variants (in vitro). Does not require ATP. Maintains partially unfolded proteins in a state appropriate for subsequent refolding by other chaperones, such as HSPA8/HSC70. Does not refold proteins by itself. Binding to cell surface receptors triggers internalization of the chaperone-client complex and subsequent lysosomal or proteasomal degradation. When secreted, protects cells against apoptosis and against cytolysis by complement: inhibits assembly of the complement membrane attack complex (MAC) by preventing polymerization of C9 pore component of the MAC complex. Intracellular forms interact with ubiquitin and SCF (SKP1-CUL1-F-box protein) E3 ubiquitin-protein ligase complexes and promote the ubiquitination and subsequent proteasomal degradation of target proteins. Promotes proteasomal degradation of COMMD1 and IKBKB. Modulates NF-kappa-B transcriptional activity. Following stress, promotes apoptosis. Inhibits apoptosis when associated with the mitochondrial membrane by interference with BAX-dependent release of cytochrome c into the cytoplasm. Plays a role in the regulation of cell proliferation. An intracellular form suppresses stress-induced apoptosis by stabilizing mitochondrial membrane integrity through interaction with HSPA5. Secreted form does not affect caspase or BAX-mediated intrinsic apoptosis and TNF-induced NF-kappa-B-activity. Secreted form act as an important modulator during neuronal differentiation through interaction with STMN3. Plays a role in the clearance of immune complexes that arise during cell injury. In Ovis aries (Sheep), this protein is Clusterin (CLU).